We begin with the raw amino-acid sequence, 114 residues long: Dihydroneopterin monophosphate aldolase (114 aa).

3 residues coordinate Zn(2+): His15, His26, and His28.

It belongs to the PTPS family. Zn(2+) serves as cofactor.

It carries out the reaction 7,8-dihydroneopterin 3'-phosphate = glycolaldehyde phosphate + 6-hydroxymethyl-7,8-dihydropterin. Functionally, catalyzes the conversion of 7,8-dihydroneopterin monophosphate (H2NMP) to 6-hydroxymethyl-7,8-dihydropterin (6-HMD). Cannot use 7,8-dihydroneopterin (H2Neo) or 7,8-dihydroneopterin triphosphate (H2NTP) as substrate. The chain is Dihydroneopterin monophosphate aldolase from Pyrococcus furiosus (strain ATCC 43587 / DSM 3638 / JCM 8422 / Vc1).